The primary structure comprises 271 residues: MLPTVFIVSDGTGITAETFAHSILSQFDQKFRLVRVPFVDSLDKAYATVEKINEAAVHDGRRAIVFTTLVDSESNDIVKRSNALVLDMFQRFVEPLEQELELKSSHAMGRGHQNADTEEYKTRIEAINFSLAHDDGQSNRNLSEADVILVGVSRSGKTPTSLYLAMQYGVKAANYPLIPEDFERGKLPSALSPYSEKLFGLSIDPQRLSEIRNERRPGSKYAAPENCRYEINEAEAMMRREGIKWLSSTHKSIEEIATTILQEIRLDRQSY.

151-158 serves as a coordination point for ADP; that stretch reads GVSRSGKT.

It belongs to the pyruvate, phosphate/water dikinase regulatory protein family. PSRP subfamily.

It catalyses the reaction [pyruvate, water dikinase] + ADP = [pyruvate, water dikinase]-phosphate + AMP + H(+). The catalysed reaction is [pyruvate, water dikinase]-phosphate + phosphate + H(+) = [pyruvate, water dikinase] + diphosphate. Functionally, bifunctional serine/threonine kinase and phosphorylase involved in the regulation of the phosphoenolpyruvate synthase (PEPS) by catalyzing its phosphorylation/dephosphorylation. The chain is Putative phosphoenolpyruvate synthase regulatory protein from Burkholderia cenocepacia (strain ATCC BAA-245 / DSM 16553 / LMG 16656 / NCTC 13227 / J2315 / CF5610) (Burkholderia cepacia (strain J2315)).